We begin with the raw amino-acid sequence, 337 residues long: Anthranilate phosphoribosyltransferase (337 aa).

5-phospho-alpha-D-ribose 1-diphosphate-binding positions include glycine 82, 85–86 (GD), threonine 90, 92–95 (NIST), 110–118 (KHGGRSVSS), and serine 122. Glycine 82 is an anthranilate binding site. Position 94 (serine 94) interacts with Mg(2+). Residue arginine 168 coordinates anthranilate. Residues aspartate 226 and glutamate 227 each contribute to the Mg(2+) site.

It belongs to the anthranilate phosphoribosyltransferase family. Homodimer. Mg(2+) is required as a cofactor.

It carries out the reaction N-(5-phospho-beta-D-ribosyl)anthranilate + diphosphate = 5-phospho-alpha-D-ribose 1-diphosphate + anthranilate. Its pathway is amino-acid biosynthesis; L-tryptophan biosynthesis; L-tryptophan from chorismate: step 2/5. In terms of biological role, catalyzes the transfer of the phosphoribosyl group of 5-phosphorylribose-1-pyrophosphate (PRPP) to anthranilate to yield N-(5'-phosphoribosyl)-anthranilate (PRA). In Francisella tularensis subsp. novicida (strain U112), this protein is Anthranilate phosphoribosyltransferase.